The sequence spans 481 residues: Probable Xaa-Pro aminopeptidase PEPP (481 aa).

Mn(2+)-binding residues include D265, D276, E399, and E439.

It belongs to the peptidase M24B family. Mn(2+) is required as a cofactor.

It carries out the reaction Release of any N-terminal amino acid, including proline, that is linked to proline, even from a dipeptide or tripeptide.. Functionally, catalyzes the removal of a penultimate prolyl residue from the N-termini of peptides. The polypeptide is Probable Xaa-Pro aminopeptidase PEPP (PEPP) (Uncinocarpus reesii (strain UAMH 1704)).